The primary structure comprises 300 residues: Hydroxyquinol 1,2-dioxygenase (300 aa).

Positions 167, 200, 224, and 226 each coordinate Fe cation.

This sequence belongs to the intradiol ring-cleavage dioxygenase family. Fe(3+) serves as cofactor.

The catalysed reaction is benzene-1,2,4-triol + O2 = maleylacetate + 2 H(+). Its pathway is aromatic compound metabolism. The protein operates within xenobiotic degradation. In terms of biological role, involved in the degradation of para-nitrophenol (4-NP). Catalyzes the conversion of hydroxyquinol to malelylacetate. The sequence is that of Hydroxyquinol 1,2-dioxygenase (npcC) from Rhodococcus opacus (Nocardia opaca).